We begin with the raw amino-acid sequence, 309 residues long: tRNA pseudouridine synthase B (309 aa).

Residue D52 is the Nucleophile of the active site.

It belongs to the pseudouridine synthase TruB family. Type 1 subfamily.

It catalyses the reaction uridine(55) in tRNA = pseudouridine(55) in tRNA. Responsible for synthesis of pseudouridine from uracil-55 in the psi GC loop of transfer RNAs. This chain is tRNA pseudouridine synthase B, found in Leptospira interrogans serogroup Icterohaemorrhagiae serovar Lai (strain 56601).